The chain runs to 387 residues: S-adenosylmethionine synthase (387 aa).

His17 provides a ligand contact to ATP. Asp19 lines the Mg(2+) pocket. Glu45 lines the K(+) pocket. Residues Glu58 and Gln101 each contribute to the L-methionine site. The tract at residues 101 to 111 (QSPDIAQGVDR) is flexible loop. Residues 168 to 170 (DAK), 234 to 235 (RF), Asp243, 249 to 250 (RK), Ala266, and Lys270 contribute to the ATP site. Asp243 is a binding site for L-methionine. Lys274 contacts L-methionine.

Belongs to the AdoMet synthase family. In terms of assembly, homotetramer; dimer of dimers. Mg(2+) is required as a cofactor. It depends on K(+) as a cofactor.

Its subcellular location is the cytoplasm. It carries out the reaction L-methionine + ATP + H2O = S-adenosyl-L-methionine + phosphate + diphosphate. The protein operates within amino-acid biosynthesis; S-adenosyl-L-methionine biosynthesis; S-adenosyl-L-methionine from L-methionine: step 1/1. Its function is as follows. Catalyzes the formation of S-adenosylmethionine (AdoMet) from methionine and ATP. The overall synthetic reaction is composed of two sequential steps, AdoMet formation and the subsequent tripolyphosphate hydrolysis which occurs prior to release of AdoMet from the enzyme. The protein is S-adenosylmethionine synthase of Bordetella petrii (strain ATCC BAA-461 / DSM 12804 / CCUG 43448).